The chain runs to 461 residues: Bacterial E1-like protein BilD (461 aa).

Residue C385 is the Glycyl thioester intermediate of the active site.

Functionally, component of the Bil (bacterial ISG15-like) antiviral defense system, composed of BilA, BilB, BilC and BilD. The Bil system specifically conjugates a ubiquitin-like moiety (bilA) to the bacteriophage central tail fiber (CTF, or tip attachment protein J) via reactions involving E1 (bilD) and E2 (bilB). Modifies CTF of phage SECphi27 and SECphi4, which probably interferes with assembly of the phage tail. Also modifies T5 baseplate hub protein pb3 (gene D16), but not gp27 of phage T6 (Bil defends against T6). BilD (E1) catalyzes the first step in conjugation. Activates ubiquitin-like BilA by first adenylating its C-terminal glycine residue with ATP, and then conjugates it to the side chain of a cysteine residue in E1 (this protein), yielding a ubiquitin-E1 thioester and free AMP. Bil-encoding bacteria produce mostly defective phage SECphi27, many of which have phage assembly defects, including no tails. SECphi27 phage progeny produced in E.coli with the Bil system inject less DNA into naive host cells, maybe because the phage are less able to adsorb and inject their DNA into host cells. Expression of the Bil system in E.coli (strain MG1655) confers about 100-fold resistance to phage SECphi27, SECphi18, SECphi6, SECphi4 and T5, but not to SECphi17. When cells expressing the Bil system are infected by phage SECphi27 at low multiplicity of infection (0.03 MOI) the culture survives, at 3.0 MOI the culture collapses at the same time as cells without the Bil system. This is Bacterial E1-like protein BilD from Collimonas sp. (strain OK412).